A 106-amino-acid chain; its full sequence is MPKANPTRKTKATRETGGRKKKDPNAPKRGLSAYMFFANDNRDKVREENPGISFGQVGKMLGEKWKSLSDKERKPYEDKAAADKKRYEDEKAAYKAGEAEEDEESS.

Over residues Met1–Lys11 the composition is skewed to basic residues. Disordered stretches follow at residues Met1 to Ala33 and Met60 to Ser106. Basic and acidic residues-rich tracts occupy residues Ala12–Ala26 and Leu61–Ala93. The HMG box DNA-binding region spans Pro27–Lys95.

The protein belongs to the NHP6 family. In terms of assembly, weakly associates with the stable spt16-pob3 heterodimer to form the FACT complex.

Its subcellular location is the nucleus. It localises to the chromosome. DNA-binding protein that induces severe bending of DNA. Required for DNA-binding by the FACT complex, a general chromatin factor that acts to reorganize nucleosomes. The FACT complex is involved in multiple processes that require DNA as a template such as mRNA elongation, DNA replication and DNA repair. Also augments the fidelity of transcription by RNA polymerase III independently of any role in the FACT complex. The polypeptide is Non-histone chromosomal protein 6 (nhp6) (Emericella nidulans (strain FGSC A4 / ATCC 38163 / CBS 112.46 / NRRL 194 / M139) (Aspergillus nidulans)).